Consider the following 101-residue polypeptide: MIPGEVMPADGTIELNAGAQAVTLEVSNTGDRPIQVGSHYHFGEANGALDFDRDAARGMRLDIAAGTAVRFEPGQTREVRLVPYGGARRVFGFNQTVMGDL.

It belongs to the urease beta subunit family. In terms of assembly, heterotrimer of UreA (gamma), UreB (beta) and UreC (alpha) subunits. Three heterotrimers associate to form the active enzyme.

The protein resides in the cytoplasm. It catalyses the reaction urea + 2 H2O + H(+) = hydrogencarbonate + 2 NH4(+). The protein operates within nitrogen metabolism; urea degradation; CO(2) and NH(3) from urea (urease route): step 1/1. This chain is Urease subunit beta, found in Jannaschia sp. (strain CCS1).